A 343-amino-acid polypeptide reads, in one-letter code: Polyprenal reductase 2 (343 aa).

6 helical membrane passes run 12–32 (GAWI…SIPT), 66–86 (FAHF…ATWM), 164–184 (MHIL…LSLC), 223–243 (PLMK…WGWI), 266–286 (IIPY…AEIV), and 291–311 (LLIA…FVAA).

Belongs to the steroid 5-alpha reductase family. Polyprenal reductase subfamily. As to expression, expressed in roots, leaves, stems and flowers.

The protein localises to the endoplasmic reticulum membrane. It catalyses the reaction a di-trans,poly-cis-dolichal + NADP(+) = a di-trans,poly-cis-polyprenal + NADPH + H(+). Its pathway is protein modification; protein glycosylation. In terms of biological role, plays a key role in early steps of protein N-linked glycosylation by being involved in the conversion of polyprenol into dolichol. Acts as a polyprenal reductase that mediates the reduction of polyprenal into dolichal in a NADP-dependent mechanism. Dolichols are required for the synthesis of dolichol-linked monosaccharides and the oligosaccharide precursor used for N-glycosylation. Involved in the regulation of plant growth and reproductive processes. The chain is Polyprenal reductase 2 from Arabidopsis thaliana (Mouse-ear cress).